The primary structure comprises 177 residues: UPF0114 protein HPP12_0190 (177 aa).

4 helical membrane passes run 15–35, 54–74, 102–122, and 145–165; these read WLLA…GYAF, LVLS…VLMV, FNAL…IFLL, and PIFW…LAAV.

The protein belongs to the UPF0114 family.

It localises to the cell membrane. This chain is UPF0114 protein HPP12_0190, found in Helicobacter pylori (strain P12).